We begin with the raw amino-acid sequence, 256 residues long: Thiazole synthase (256 aa).

The Schiff-base intermediate with DXP role is filled by Lys-95. Residues Gly-156, 182–183 (AG), and 204–205 (NT) contribute to the 1-deoxy-D-xylulose 5-phosphate site.

It belongs to the ThiG family. In terms of assembly, homotetramer. Forms heterodimers with either ThiH or ThiS.

It is found in the cytoplasm. The catalysed reaction is [ThiS sulfur-carrier protein]-C-terminal-Gly-aminoethanethioate + 2-iminoacetate + 1-deoxy-D-xylulose 5-phosphate = [ThiS sulfur-carrier protein]-C-terminal Gly-Gly + 2-[(2R,5Z)-2-carboxy-4-methylthiazol-5(2H)-ylidene]ethyl phosphate + 2 H2O + H(+). It functions in the pathway cofactor biosynthesis; thiamine diphosphate biosynthesis. Its function is as follows. Catalyzes the rearrangement of 1-deoxy-D-xylulose 5-phosphate (DXP) to produce the thiazole phosphate moiety of thiamine. Sulfur is provided by the thiocarboxylate moiety of the carrier protein ThiS. In vitro, sulfur can be provided by H(2)S. The protein is Thiazole synthase of Salmonella typhi.